Consider the following 436-residue polypeptide: D-amino acid dehydrogenase (436 aa).

3–17 is a binding site for FAD; it reads ILILGSGVIGVTSAW.

The protein belongs to the DadA oxidoreductase family. FAD serves as cofactor.

The catalysed reaction is a D-alpha-amino acid + A + H2O = a 2-oxocarboxylate + AH2 + NH4(+). Its pathway is amino-acid degradation; D-alanine degradation; NH(3) and pyruvate from D-alanine: step 1/1. Its function is as follows. Oxidative deamination of D-amino acids. The protein is D-amino acid dehydrogenase of Photorhabdus laumondii subsp. laumondii (strain DSM 15139 / CIP 105565 / TT01) (Photorhabdus luminescens subsp. laumondii).